The sequence spans 178 residues: HTH-type transcriptional regulator SutR (178 aa).

Residues 12 to 66 (LKQLRQQRGWSLSRLAEATGVSKAMLGQIERNESSPTVATLWKIATGLNVPFSTF) form the HTH cro/C1-type domain. The H-T-H motif DNA-binding region spans 23–42 (LSRLAEATGVSKAMLGQIER). One can recognise a Cupin type-2 domain in the interval 105–171 (QMASGAISES…GGEQTVHFHS (67 aa)).

Its function is as follows. Regulates the expression of 12-16 transcription units involved in various steps of sulfur utilization. Represses expression of pfkB, fliZ, cysE, ydcO and its own expression. Activates expression of ypfN. Acts by binding to SutR boxes. This is HTH-type transcriptional regulator SutR from Escherichia coli (strain K12).